The primary structure comprises 85 residues: uncharacterized protein (85 aa).

The first 20 residues, 1 to 20 (MIKLFCVLAAFISINSACQS), serve as a signal peptide directing secretion.

This is an uncharacterized protein from Invertebrate iridescent virus 6 (IIV-6).